Reading from the N-terminus, the 516-residue chain is Circadian clock oscillator protein KaiC (516 aa).

2 KaiC domains span residues 1-244 (MNQP…INIF) and 258-516 (ARIS…TLPE). Residues Gly-46, Thr-47, Gly-48, Lys-49, Thr-50, Leu-51, Ser-86, Lys-221, Leu-222, Arg-223, Thr-225, His-227, Thr-237, Thr-287, Gly-288, Thr-289, Gly-290, Lys-291, Thr-292, and Leu-293 each coordinate ATP. Thr-50 lines the Mg(2+) pocket. Thr-292 provides a ligand contact to Mg(2+). Residue Glu-315 coordinates Mg(2+). Position 328 (Trp-328) interacts with ATP. Ser-428 is modified (phosphoserine; by autocatalysis). Thr-429 carries the phosphothreonine; by autocatalysis modification. Residues Arg-448, Lys-454, Met-455, Arg-456, Ser-458, His-460, and Lys-462 each contribute to the ATP site.

The protein belongs to the KaiC family. Homohexamer; hexamerization is dependent on ATP-binding. The KaiABC complex composition changes during the circadian cycle to control KaiC phosphorylation. Complexes KaiC(6), KaiA(2-4):KaiC(6), KaiB(6):KaiC(6) and KaiC(6):KaiB(6):KaiA(12) are among the most important forms, many form cooperatively. KaiC interacts with SasA, activating its autokinase function and leading to RpaA activation. The cofactor is Mg(2+). Phosphorylated on serine and threonine residues by autocatalysis. Has a 4 step phosphorylation cycle; the autokinase acts first on Thr-429, then Ser-428. When Ser-428 is modified KaiC switches to an autophosphatase mode, acting first on phospho-Thr-429 then phospho-Ser-428.

The enzyme catalyses L-seryl-[protein] + ATP = O-phospho-L-seryl-[protein] + ADP + H(+). It catalyses the reaction L-threonyl-[protein] + ATP = O-phospho-L-threonyl-[protein] + ADP + H(+). It carries out the reaction ATP + H2O = ADP + phosphate + H(+). The interaction with KaiA enhances its phosphorylation status, while the interaction with KaiB decreases it. Central component of the KaiABC oscillator complex, which constitutes the main circadian regulator in cyanobacteria. Complex composition changes during the circadian cycle to control KaiC phosphorylation. KaiA stimulates KaiC autophosphorylation, while KaiB sequesters KaiA, leading to KaiC autodephosphorylation. Clock output pathways impact the RpaA transcriptional regulator. KaiC enhances the autophosphorylation activity of SasA, which then transfers its phosphate group to RpaA to activate it. KaiB and KaiC together enhance the phospho-RpaA dephosphatase activity of CikA. Functionally, has a weak, temperature-independent ATPase activity; ATPase activity defines the circadian period. The phosphorylation state of KaiC modulates its ATPase activity and effects KaiB binding. This chain is Circadian clock oscillator protein KaiC, found in Picosynechococcus sp. (strain ATCC 27264 / PCC 7002 / PR-6) (Agmenellum quadruplicatum).